Consider the following 237-residue polypeptide: Ribonuclease PH (237 aa).

Phosphate is bound by residues Arg-86 and 124–126 (GTR).

The protein belongs to the RNase PH family. In terms of assembly, homohexameric ring arranged as a trimer of dimers.

The enzyme catalyses tRNA(n+1) + phosphate = tRNA(n) + a ribonucleoside 5'-diphosphate. In terms of biological role, phosphorolytic 3'-5' exoribonuclease that plays an important role in tRNA 3'-end maturation. Removes nucleotide residues following the 3'-CCA terminus of tRNAs; can also add nucleotides to the ends of RNA molecules by using nucleoside diphosphates as substrates, but this may not be physiologically important. Probably plays a role in initiation of 16S rRNA degradation (leading to ribosome degradation) during starvation. The protein is Ribonuclease PH of Nitrobacter winogradskyi (strain ATCC 25391 / DSM 10237 / CIP 104748 / NCIMB 11846 / Nb-255).